Reading from the N-terminus, the 678-residue chain is uncharacterized protein (678 aa).

Transmembrane regions (helical) follow at residues 14–34 (LMFA…WTGL) and 180–200 (GAVI…IGGF).

The protein belongs to the mycobacterial PPE family.

The protein resides in the cell membrane. This is an uncharacterized protein from Mycobacterium tuberculosis (strain ATCC 25618 / H37Rv).